Consider the following 37-residue polypeptide: uncharacterized protein (37 aa).

Residues 1-21 (MQDLEIFLSIFAFIFVFYFGA) traverse the membrane as a helical segment.

It is found in the endoplasmic reticulum membrane. This is an uncharacterized protein from Saccharomyces cerevisiae (strain ATCC 204508 / S288c) (Baker's yeast).